The chain runs to 506 residues: Galactose/methyl galactoside import ATP-binding protein MglA (506 aa).

ABC transporter domains are found at residues 14–249 (LTMT…VGRE) and 264–506 (VILE…AKYL). An ATP-binding site is contributed by 46–53 (GENGAGKS).

This sequence belongs to the ABC transporter superfamily. Galactose/methyl galactoside importer (TC 3.A.1.2.3) family. The complex is composed of one ATP-binding protein (MglA), two transmembrane proteins (MglC) and a solute-binding protein (MglB).

It is found in the cell inner membrane. It catalyses the reaction D-galactose(out) + ATP + H2O = D-galactose(in) + ADP + phosphate + H(+). It carries out the reaction methyl beta-D-galactoside(out) + ATP + H2O = methyl beta-D-galactoside(in) + ADP + phosphate + H(+). Functionally, part of the ABC transporter complex MglABC involved in galactose/methyl galactoside import. Responsible for energy coupling to the transport system. The protein is Galactose/methyl galactoside import ATP-binding protein MglA of Mannheimia succiniciproducens (strain KCTC 0769BP / MBEL55E).